Reading from the N-terminus, the 317-residue chain is Ferrochelatase (317 aa).

Residues His-191 and Glu-271 each contribute to the Fe cation site.

The protein belongs to the ferrochelatase family.

It localises to the cytoplasm. It carries out the reaction heme b + 2 H(+) = protoporphyrin IX + Fe(2+). It participates in porphyrin-containing compound metabolism; protoheme biosynthesis; protoheme from protoporphyrin-IX: step 1/1. Its function is as follows. Catalyzes the ferrous insertion into protoporphyrin IX. This Thermus thermophilus (strain ATCC BAA-163 / DSM 7039 / HB27) protein is Ferrochelatase.